The primary structure comprises 63 residues: Large ribosomal subunit protein bL35 (63 aa).

This sequence belongs to the bacterial ribosomal protein bL35 family.

The polypeptide is Large ribosomal subunit protein bL35 (Finegoldia magna (strain ATCC 29328 / DSM 20472 / WAL 2508) (Peptostreptococcus magnus)).